A 602-amino-acid polypeptide reads, in one-letter code: Auxin response factor 18 (602 aa).

The segment at residues 128 to 230 (FVKILTASDT…DLRVGVRRLA (103 aa)) is a DNA-binding region (TF-B3). The interval 359 to 396 (TSPISTPAQQPQSKCKRSRPIEPSVKTPAPPSFLYSLP) is disordered. Positions 360 to 371 (SPISTPAQQPQS) are enriched in polar residues. One can recognise a PB1 domain in the interval 489-581 (RSRTKVQMQG…EVKKMTTKLK (93 aa)).

The protein belongs to the ARF family. In terms of assembly, homodimers and heterodimers.

The protein resides in the nucleus. Its function is as follows. Auxin response factors (ARFs) are transcriptional factors that bind specifically to the DNA sequence 5'-TGTCTC-3' found in the auxin-responsive promoter elements (AuxREs). Could act as transcriptional activator or repressor. Formation of heterodimers with Aux/IAA proteins may alter their ability to modulate early auxin response genes expression. This is Auxin response factor 18 (ARF18) from Arabidopsis thaliana (Mouse-ear cress).